A 583-amino-acid polypeptide reads, in one-letter code: Proteasome-associated ATPase (583 aa).

A coiled-coil region spans residues 2–90 (ASREDRDAAN…REEVDRLAQP (89 aa)). Residue 271–276 (GCGKTL) coordinates ATP. The docks into pockets in the proteasome alpha-ring stretch occupies residues 582 to 583 (YL).

This sequence belongs to the AAA ATPase family. As to quaternary structure, homohexamer. Assembles into a hexameric ring structure that caps the 20S proteasome core. Strongly interacts with the prokaryotic ubiquitin-like protein Pup through a hydrophobic interface; the interacting region of ARC lies in its N-terminal coiled-coil domain. There is one Pup binding site per ARC hexamer ring. Upon ATP-binding, the C-terminus of ARC interacts with the alpha-rings of the proteasome core, possibly by binding to the intersubunit pockets.

Its pathway is protein degradation; proteasomal Pup-dependent pathway. In terms of biological role, ATPase which is responsible for recognizing, binding, unfolding and translocation of pupylated proteins into the bacterial 20S proteasome core particle. May be essential for opening the gate of the 20S proteasome via an interaction with its C-terminus, thereby allowing substrate entry and access to the site of proteolysis. Thus, the C-termini of the proteasomal ATPase may function like a 'key in a lock' to induce gate opening and therefore regulate proteolysis. The polypeptide is Proteasome-associated ATPase (Acidothermus cellulolyticus (strain ATCC 43068 / DSM 8971 / 11B)).